Here is a 413-residue protein sequence, read N- to C-terminus: 2,3-diketo-5-methylthiopentyl-1-phosphate enolase (413 aa).

Catalysis depends on Lys-98, which acts as the Proton acceptor. Residues Lys-147, Lys-173 to Glu-176, His-264, Gly-337, and Gly-359 to Gly-360 each bind substrate. Mg(2+) is bound by residues Lys-173, Asp-175, and Glu-176. Lys-173 carries the post-translational modification N6-carboxylysine.

This sequence belongs to the RuBisCO large chain family. Type IV subfamily. Homodimer. Requires Mg(2+) as cofactor.

It catalyses the reaction 5-methylsulfanyl-2,3-dioxopentyl phosphate = 2-hydroxy-5-methylsulfanyl-3-oxopent-1-enyl phosphate. The protein operates within amino-acid biosynthesis; L-methionine biosynthesis via salvage pathway; L-methionine from S-methyl-5-thio-alpha-D-ribose 1-phosphate: step 3/6. Functionally, catalyzes the enolization of 2,3-diketo-5-methylthiopentyl-1-phosphate (DK-MTP-1-P) into 2-hydroxy-3-keto-5-methylthiopentenyl-1-phosphate (HK-MTPenyl-1-P). In Geobacillus thermodenitrificans (strain NG80-2), this protein is 2,3-diketo-5-methylthiopentyl-1-phosphate enolase.